The primary structure comprises 164 residues: Large ribosomal subunit protein uL11 (164 aa).

This sequence belongs to the universal ribosomal protein uL11 family. In terms of assembly, part of the ribosomal stalk of the 50S ribosomal subunit. Interacts with L10 and the large rRNA to form the base of the stalk. L10 forms an elongated spine to which L12 dimers bind in a sequential fashion forming a multimeric L10(L12)X complex.

Forms part of the ribosomal stalk which helps the ribosome interact with GTP-bound translation factors. The sequence is that of Large ribosomal subunit protein uL11 from Pyrococcus furiosus (strain ATCC 43587 / DSM 3638 / JCM 8422 / Vc1).